The primary structure comprises 49 residues: Putative exported peptide YydF (49 aa).

Functionally, suggested to be the precursor for an exported, modified peptide that has antimicrobial and/or signaling properties. Synthesis requires YydG and YydH; the peptide is proposed to be exported by the YydIJ transporter. In the absence of the transporter, the modified peptide activates the LiaRS two-component regulatory system, possibly by eliciting cell envelope stress. This activation can occur in trans in cocultured cells lacking either the transporter or the whole operon. This Bacillus subtilis (strain 168) protein is Putative exported peptide YydF (yydF).